The chain runs to 232 residues: MSQFPEVLDNNLLHAENNETAEYIQNDGTNQSEVFMEHPYTPNMHPINMPSIVEGAVHPYNNLIHHNDAIPPAKYASMRQMTEDFWREKKQKMTEISEEDMLNKSKNMSVPMARVKKIMRIDDDVRNFMIASDAPIFMAQAAEFFIEEMTAMGWQYVSEARRRILQKADIASAVQKSDQFDFLIDFLPPKTVPTTSTNGPGHMSEDSFQDPNMHSDFHQRTSNSSVNRSHHN.

The tract at residues 191 to 232 (TVPTTSTNGPGHMSEDSFQDPNMHSDFHQRTSNSSVNRSHHN) is disordered. The segment covering 220–232 (RTSNSSVNRSHHN) has biased composition (polar residues).

Belongs to the NFYC/HAP5 subunit family. Forms two NF-Y heterotrimeric transcription factor complexes: the nfya-1-NF-Y complex is composed of nfya-1, nfyb-1 and nfyc-1, and the nfya-2-NF-Y complex is composed of nfya-2, nfyb-1 and nfyc-1. Interacts with nfyb-1; the interaction is direct and is required for the interaction with either nfya-1 or nfya-2, and subsequent binding of the complex to the 5'-CCAAT-3' box motif in DNA. As to expression, expressed in certain parts of the gonads with high expression in fertilized oocytes in the uterus and mature oocytes from the distal to the proximal arm of the gonad, but weak expression in the syncytial ovaries and immature oocytes at the beginning of the proximal arm of the gonad. Expressed in the excretory cell, secretory cells in the pharyngeal terminal bulb wall, in the small ganglia surrounding the pharynx and in the neurons running anteriorly to the sensory organs in the head. Not expressed in the intestine, the hypodermis or body wall muscle surrounding the pseudocoelomic space.

Its subcellular location is the nucleus. It is found in the cytoplasm. The protein resides in the perikaryon. Component of sequence-specific heterotrimeric transcription factor (nfya-1-NF-Y and nfya-2-NF-Y) complexes which specifically recognize a 5'-CCAAT-3' box motif found in the promoters of its target genes to regulate their expression and control cellular identity in particular tissue types. In association with the components in the NF-Y complexes, represses the expression of the T-box transcription factor tbx-2 throughout larval development, which most likely restricts its expression to certain tissues. May act to repress txb-2 expression in conjunction with tbx-2 itself, which has an autoregulatory role. In association with the components in the nfya-1-NF-Y complex, negatively regulates the expression of the homeobox protein egl-5 to spatially restrict its expression in tissues such as the head. May regulate egl-5 expression in association with the mes-2-mes-3-mes-6 complex. This is Nuclear transcription factor Y subunit nfyc-1 from Caenorhabditis elegans.